The following is a 183-amino-acid chain: Large ribosomal subunit protein bL25 (183 aa).

The protein belongs to the bacterial ribosomal protein bL25 family. CTC subfamily. In terms of assembly, part of the 50S ribosomal subunit; part of the 5S rRNA/L5/L18/L25 subcomplex. Contacts the 5S rRNA. Binds to the 5S rRNA independently of L5 and L18.

Its function is as follows. This is one of the proteins that binds to the 5S RNA in the ribosome where it forms part of the central protuberance. The protein is Large ribosomal subunit protein bL25 of Desulfotalea psychrophila (strain LSv54 / DSM 12343).